The chain runs to 495 residues: Probable cytosol aminopeptidase (495 aa).

2 residues coordinate Mn(2+): lysine 267 and aspartate 272. Lysine 279 is a catalytic residue. Aspartate 290, aspartate 349, and glutamate 351 together coordinate Mn(2+). Residue arginine 353 is part of the active site.

It belongs to the peptidase M17 family. Requires Mn(2+) as cofactor.

The protein localises to the cytoplasm. The catalysed reaction is Release of an N-terminal amino acid, Xaa-|-Yaa-, in which Xaa is preferably Leu, but may be other amino acids including Pro although not Arg or Lys, and Yaa may be Pro. Amino acid amides and methyl esters are also readily hydrolyzed, but rates on arylamides are exceedingly low.. It catalyses the reaction Release of an N-terminal amino acid, preferentially leucine, but not glutamic or aspartic acids.. In terms of biological role, presumably involved in the processing and regular turnover of intracellular proteins. Catalyzes the removal of unsubstituted N-terminal amino acids from various peptides. The sequence is that of Probable cytosol aminopeptidase from Histophilus somni (strain 2336) (Haemophilus somnus).